Here is an 800-residue protein sequence, read N- to C-terminus: Cation/H(+) antiporter 9 (800 aa).

The next 12 membrane-spanning stretches (helical) occupy residues 43 to 63 (VIFGYALPLLELQIILIFVCI), 73 to 93 (IGIPRFVSNILAGLILGPQLL), 110 to 130 (NVALEGVARLGLVMFTFLMGV), 145 to 165 (IVIAVSSFFVTMISGLAFRNF), 186 to 206 (VIVSIQAVTLLPVITHLVYEL), 216 to 236 (IAISTAAVSDFLGFLTLVCIS), 247 to 267 (GIANRDIVALIILVLVILFIF), 287 to 306 (VYLYVTILTAIAASIYLSVF), 338 to 358 (LVTNIFFPISIAVMAMKADVV), 371 to 391 (ILLLGLTVVVKWTASFVPCLI), 401 to 421 (VIIATIMNYKGFVDLCFFDVA), and 430 to 450 (ATYTVMIIYVLLNAGILPTII).

Belongs to the monovalent cation:proton antiporter 2 (CPA2) transporter (TC 2.A.37) family. CHX (TC 2.A.37.4) subfamily.

The protein resides in the membrane. Functionally, may operate as a cation/H(+) antiporter. This chain is Cation/H(+) antiporter 9 (CHX9), found in Arabidopsis thaliana (Mouse-ear cress).